A 284-amino-acid polypeptide reads, in one-letter code: UPF0276 protein PA14_21580 (284 aa).

Belongs to the UPF0276 family.

This is UPF0276 protein PA14_21580 from Pseudomonas aeruginosa (strain UCBPP-PA14).